The chain runs to 130 residues: Holo-[acyl-carrier-protein] synthase (130 aa).

Mg(2+)-binding residues include aspartate 8 and glutamate 62.

It belongs to the P-Pant transferase superfamily. AcpS family. Requires Mg(2+) as cofactor.

Its subcellular location is the cytoplasm. It carries out the reaction apo-[ACP] + CoA = holo-[ACP] + adenosine 3',5'-bisphosphate + H(+). Functionally, transfers the 4'-phosphopantetheine moiety from coenzyme A to a Ser of acyl-carrier-protein. This chain is Holo-[acyl-carrier-protein] synthase, found in Polynucleobacter asymbioticus (strain DSM 18221 / CIP 109841 / QLW-P1DMWA-1) (Polynucleobacter necessarius subsp. asymbioticus).